Consider the following 457-residue polypeptide: Putative transposase y4bF (457 aa).

In terms of domain architecture, Integrase catalytic spans 128–313 (TFHQPRLRRE…RPLNLAPDRL (186 aa)). The disordered stretch occupies residues 406–440 (QDERPAPKVRTNSEKNGYTPRGRKPGKRTDFMNDP).

This chain is Putative transposase y4bF, found in Sinorhizobium fredii (strain NBRC 101917 / NGR234).